The following is a 24-amino-acid chain: Myotoxin TmC4-47.2 (24 aa).

A disordered region spans residues Lys-1 to Met-24. The span at Trp-10–Met-24 shows a compositional bias: basic residues. The region spanning His-13–Met-24 is the C-type lectin domain.

As to expression, expressed by the venom gland.

It localises to the secreted. Able to depolarize frog skeletal muscle fibers, but has no effects on squid giant axons. Tetrodotoxin is able to partially antagonize the depolarization. Induces myonecrosis. The sequence is that of Myotoxin TmC4-47.2 from Thalassophryne maculosa (Cano toadfish).